The primary structure comprises 108 residues: Insulin (108 aa).

The N-terminal stretch at 1-24 (MALWTRLLPLLALLALWAPAPAQA) is a signal peptide. Disulfide bonds link Cys-31/Cys-94, Cys-43/Cys-107, and Cys-93/Cys-98. A propeptide spans 57-85 (EAENPQAGAVELGGGLGGLQALALEGPPQ) (c peptide).

This sequence belongs to the insulin family. In terms of assembly, heterodimer of a B chain and an A chain linked by two disulfide bonds.

The protein resides in the secreted. In terms of biological role, insulin decreases blood glucose concentration. It increases cell permeability to monosaccharides, amino acids and fatty acids. It accelerates glycolysis, the pentose phosphate cycle, and glycogen synthesis in liver. In Sus scrofa (Pig), this protein is Insulin (INS).